The chain runs to 151 residues: UPF0756 membrane protein HS_0993 (151 aa).

The next 4 membrane-spanning stretches (helical) occupy residues 1-21 (MSLQ…LGVL), 52-72 (YGVN…IVSG), 81-101 (ALIH…AWFG), and 123-143 (ILGV…AGIL).

This sequence belongs to the UPF0756 family.

It is found in the cell membrane. The chain is UPF0756 membrane protein HS_0993 from Histophilus somni (strain 129Pt) (Haemophilus somnus).